A 311-amino-acid polypeptide reads, in one-letter code: Putative RNA-binding protein R05D3.8 (311 aa).

In terms of domain architecture, RRM spans 155-235; that stretch reads KRLFVSYFPL…RRAVLKESVK (81 aa). Over residues 261-270 the composition is skewed to polar residues; the sequence is TPSRPVTSVH. Residues 261–311 form a disordered region; the sequence is TPSRPVTSVHASSSASSNHYDPSAAAGYAPLYHQPPESDPLSQCGYGPRKW.

This Caenorhabditis elegans protein is Putative RNA-binding protein R05D3.8.